Reading from the N-terminus, the 154-residue chain is Ribosome maturation factor RimP (154 aa).

The protein belongs to the RimP family.

The protein localises to the cytoplasm. Required for maturation of 30S ribosomal subunits. The chain is Ribosome maturation factor RimP from Deinococcus deserti (strain DSM 17065 / CIP 109153 / LMG 22923 / VCD115).